The chain runs to 466 residues: Argininosuccinate lyase (466 aa).

The protein belongs to the lyase 1 family. Argininosuccinate lyase subfamily.

Its subcellular location is the cytoplasm. It carries out the reaction 2-(N(omega)-L-arginino)succinate = fumarate + L-arginine. It functions in the pathway amino-acid biosynthesis; L-arginine biosynthesis; L-arginine from L-ornithine and carbamoyl phosphate: step 3/3. This Campylobacter concisus (strain 13826) protein is Argininosuccinate lyase.